The sequence spans 31 residues: Cytochrome b6-f complex subunit 6 (31 aa).

A helical transmembrane segment spans residues 3–23; it reads TITSYFGFLLAALTITPALFI.

Belongs to the PetL family. The 4 large subunits of the cytochrome b6-f complex are cytochrome b6, subunit IV (17 kDa polypeptide, PetD), cytochrome f and the Rieske protein, while the 4 small subunits are PetG, PetL, PetM and PetN. The complex functions as a dimer.

Its subcellular location is the plastid. The protein localises to the chloroplast thylakoid membrane. In terms of biological role, component of the cytochrome b6-f complex, which mediates electron transfer between photosystem II (PSII) and photosystem I (PSI), cyclic electron flow around PSI, and state transitions. PetL is important for photoautotrophic growth as well as for electron transfer efficiency and stability of the cytochrome b6-f complex. In Zea mays (Maize), this protein is Cytochrome b6-f complex subunit 6.